The sequence spans 297 residues: 33 kDa chaperonin (297 aa).

2 cysteine pairs are disulfide-bonded: Cys234-Cys236 and Cys267-Cys270.

Belongs to the HSP33 family. Post-translationally, under oxidizing conditions two disulfide bonds are formed involving the reactive cysteines. Under reducing conditions zinc is bound to the reactive cysteines and the protein is inactive.

The protein resides in the cytoplasm. Its function is as follows. Redox regulated molecular chaperone. Protects both thermally unfolding and oxidatively damaged proteins from irreversible aggregation. Plays an important role in the bacterial defense system toward oxidative stress. This Pseudoalteromonas atlantica (strain T6c / ATCC BAA-1087) protein is 33 kDa chaperonin.